Reading from the N-terminus, the 389-residue chain is MSSREEVVNFAAGPAAMITSVVEEFGKDFVNFQGLGMGVAEISHRSKQGSGIVTSAESNFRKLYNIPENFHILFMQGGGTEQFAACLYNVYAHHALKNGNAKSLVANYIITGAWSKKAYAEAERLGFPCHVAVDMKELAGKYGSLPEDKDLKFTPDGETSLVYYCDNETVHGVEFNEPPTNIPKGAIRVCDVSSNFISRKIDFTKHDIIFAGAQKNAGPAGITVVFVRDSVLARPTPAELHKLNIPVSPTVSDYKIMADNHSLYNTLPVATLHAINLGLEYMLEHGGLVALEASSIEKSKLLYDTLDKHDLYISVVEPAARSRMNVTFRIEPQELESEFLAEAEKHHLVQLKGYRSVGGIRASLYNAISVEQTRRLIDLLESFAKAHSN.

Residue R45 participates in L-glutamate binding. Residues 79 to 80 (GT), W114, T169, D191, and Q214 contribute to the pyridoxal 5'-phosphate site. K215 is modified (N6-(pyridoxal phosphate)lysine). 265–266 (NT) lines the pyridoxal 5'-phosphate pocket.

It belongs to the class-V pyridoxal-phosphate-dependent aminotransferase family. SerC subfamily. Homodimer. Pyridoxal 5'-phosphate is required as a cofactor.

The catalysed reaction is O-phospho-L-serine + 2-oxoglutarate = 3-phosphooxypyruvate + L-glutamate. It catalyses the reaction 4-(phosphooxy)-L-threonine + 2-oxoglutarate = (R)-3-hydroxy-2-oxo-4-phosphooxybutanoate + L-glutamate. It participates in amino-acid biosynthesis; L-serine biosynthesis; L-serine from 3-phospho-D-glycerate: step 2/3. It functions in the pathway cofactor biosynthesis; pyridoxine 5'-phosphate biosynthesis; pyridoxine 5'-phosphate from D-erythrose 4-phosphate: step 3/5. Catalyzes the reversible conversion of 3-phosphohydroxypyruvate to phosphoserine and of 3-hydroxy-2-oxo-4-phosphonooxybutanoate to phosphohydroxythreonine. This Schizosaccharomyces pombe (strain 972 / ATCC 24843) (Fission yeast) protein is Putative phosphoserine aminotransferase.